Consider the following 84-residue polypeptide: Large ribosomal subunit protein bL27 (84 aa).

Residues 1 to 22 (MAHKKAGGSTRNGRDSESKRLG) form a disordered region.

This sequence belongs to the bacterial ribosomal protein bL27 family.

This Shewanella sp. (strain MR-4) protein is Large ribosomal subunit protein bL27.